The sequence spans 374 residues: Queuine tRNA-ribosyltransferase (374 aa).

Asp-89 functions as the Proton acceptor in the catalytic mechanism. Residues Asp-89 to Phe-93, Asp-143, Gln-187, and Gly-214 each bind substrate. The tract at residues Gly-245–Asp-251 is RNA binding. Residue Asp-264 is the Nucleophile of the active site. Residues Thr-269–Arg-273 form an RNA binding; important for wobble base 34 recognition region. The Zn(2+) site is built by Cys-302, Cys-304, Cys-307, and His-333.

It belongs to the queuine tRNA-ribosyltransferase family. In terms of assembly, homodimer. Within each dimer, one monomer is responsible for RNA recognition and catalysis, while the other monomer binds to the replacement base PreQ1. The cofactor is Zn(2+).

It catalyses the reaction 7-aminomethyl-7-carbaguanine + guanosine(34) in tRNA = 7-aminomethyl-7-carbaguanosine(34) in tRNA + guanine. It participates in tRNA modification; tRNA-queuosine biosynthesis. Its function is as follows. Catalyzes the base-exchange of a guanine (G) residue with the queuine precursor 7-aminomethyl-7-deazaguanine (PreQ1) at position 34 (anticodon wobble position) in tRNAs with GU(N) anticodons (tRNA-Asp, -Asn, -His and -Tyr). Catalysis occurs through a double-displacement mechanism. The nucleophile active site attacks the C1' of nucleotide 34 to detach the guanine base from the RNA, forming a covalent enzyme-RNA intermediate. The proton acceptor active site deprotonates the incoming PreQ1, allowing a nucleophilic attack on the C1' of the ribose to form the product. After dissociation, two additional enzymatic reactions on the tRNA convert PreQ1 to queuine (Q), resulting in the hypermodified nucleoside queuosine (7-(((4,5-cis-dihydroxy-2-cyclopenten-1-yl)amino)methyl)-7-deazaguanosine). This Shewanella sp. (strain W3-18-1) protein is Queuine tRNA-ribosyltransferase.